Consider the following 100-residue polypeptide: Large ribosomal subunit protein uL23 (100 aa).

The protein belongs to the universal ribosomal protein uL23 family. In terms of assembly, part of the 50S ribosomal subunit. Contacts protein L29, and trigger factor when it is bound to the ribosome.

Functionally, one of the early assembly proteins it binds 23S rRNA. One of the proteins that surrounds the polypeptide exit tunnel on the outside of the ribosome. Forms the main docking site for trigger factor binding to the ribosome. In Yersinia enterocolitica serotype O:8 / biotype 1B (strain NCTC 13174 / 8081), this protein is Large ribosomal subunit protein uL23.